Reading from the N-terminus, the 1290-residue chain is Sorbin and SH3 domain-containing protein 1 (1290 aa).

Disordered stretches follow at residues 1–211 (MSSE…LSDV), 238–271 (HKLN…SKSE), and 286–313 (TLPL…KKVD). A compositionally biased stretch (low complexity) spans 45-61 (SSSYRGTPSSSPVSPQE). At threonine 51 the chain carries Phosphothreonine. Phosphoserine is present on residues serine 55, serine 58, and serine 62. The span at 62–71 (SPKHESKSGL) shows a compositional bias: basic and acidic residues. Polar residues-rich tracts occupy residues 83–95 (LSSS…NAQP) and 123–153 (EVSS…TIVN). Positions 161–173 (HNRDPASERRAGE) are enriched in basic and acidic residues. Phosphoserine is present on residues aspartate 164 and aspartate 175. The residue at position 179 (threonine 179) is a Phosphothreonine. A phosphoserine mark is found at serine 185, alanine 194, serine 204, serine 209, serine 254, serine 261, serine 270, and proline 288. Basic and acidic residues predominate over residues 189–199 (ASERRAKDASR). The SoHo domain occupies 202-247 (VRSAQDLSDVSTDEVGIPLRNTERSKDWYKTMFKQIHKLNRDDDSD). Positions 240–260 (LNRDDDSDVHSPRYSFSDDTK) are enriched in basic and acidic residues. Over residues 299-313 (SPERNDWEPLDKKVD) the composition is skewed to basic and acidic residues. Tyrosine 325 bears the Phosphotyrosine; by ABL1 mark. A phosphoserine mark is found at serine 345, proline 346, tyrosine 357, serine 376, and serine 407. Residues 389 to 416 (VETVNKSPSANSPQSSAVSPTPDITSEP) are disordered. The span at 392–412 (VNKSPSANSPQSSAVSPTPDI) shows a compositional bias: polar residues. Residue tyrosine 421 is modified to Phosphotyrosine; by ABL1. Residues serine 432 and serine 470 each carry the phosphoserine modification. 6 disordered regions span residues 463 to 482 (LSGL…RKGG), 588 to 607 (YDSK…SSRR), 697 to 739 (SLDF…EMDG), 783 to 803 (VSND…PKHR), 822 to 841 (RKHE…SRGD), and 862 to 972 (PLQQ…SPRH). At threonine 475 the chain carries Phosphothreonine. Composition is skewed to polar residues over residues 595–606 (TMSLQEYGTSSR) and 704–722 (LSKS…SARS). A Phosphoserine modification is found at serine 969. SH3 domains follow at residues 1049 to 1108 (LEMR…LLPP) and 1123 to 1184 (LEYG…VLKR). At threonine 1189 the chain carries Phosphothreonine. A phosphotyrosine mark is found at tyrosine 1193 and tyrosine 1198. Residues 1198 to 1210 (YSSSPSRSATVSP) are compositionally biased toward low complexity. Residues 1198–1227 (YSSSPSRSATVSPQQPQAQQRRVTPDRSQP) form a disordered region. Phosphoserine is present on residues serine 1201 and serine 1209. The span at 1211–1227 (QQPQAQQRRVTPDRSQP) shows a compositional bias: polar residues. The region spanning 1229–1290 (LDLCSYQALY…PGNYVKPLYL (62 aa)) is the SH3 3 domain. Tyrosine 1238 carries the phosphotyrosine; by ABL1 modification.

In terms of assembly, interacts (via SH3 domain 2) with PXN. Interacts with the long isoform of AFDN and with VCL. AFDN and VCL bind to SORBS1 in a competitive manner and do not form a ternary complex. Interacts with ABL1, CBL, CBLB and INPPL1/SHIP2 through the third SH3 domain. Interaction with ABL1 occurs only after insulin stimulation while this has no effect on the interaction with INPPL1. Interacts with the insulin receptor but dissociates from it following insulin stimulation. Also interacts with SCA7, PTK2/FAK1 and flotillin. Interacts (via third SH3 domain) with the Ten-1 ICD form of TENM1; the interaction induces the translocation of SORBS1 to the nucleus. Interacts with INSM1. O-glycosylated. In terms of tissue distribution, expressed in all tissues tested: heart, brain, spleen, lung, liver, muscle, kidney and testis. Expressed in 3T3-L1 adipocytes but not in 3T3-L1 fibroblasts.

The protein resides in the cell junction. The protein localises to the adherens junction. It localises to the cell membrane. Its subcellular location is the cytoplasm. It is found in the cytoskeleton. The protein resides in the focal adhesion. The protein localises to the nucleus. It localises to the nucleus matrix. Its function is as follows. Plays a role in tyrosine phosphorylation of CBL by linking CBL to the insulin receptor. Required for insulin-stimulated glucose transport. Involved in formation of actin stress fibers and focal adhesions. The chain is Sorbin and SH3 domain-containing protein 1 from Mus musculus (Mouse).